The sequence spans 284 residues: Tropomyosin (284 aa).

Residues 1 to 284 (MDSIKKKMMA…DTTFAELTSF (284 aa)) are a coiled coil. A disordered region spans residues 97 to 140 (EDFEQSSGRLTETSTKLDDASKAAEESERNRKTLETRSISDDER). Polar residues predominate over residues 101 to 110 (QSSGRLTETS). Residues 111–140 (TKLDDASKAAEESERNRKTLETRSISDDER) are compositionally biased toward basic and acidic residues.

Belongs to the tropomyosin family. As to quaternary structure, homodimer.

Its function is as follows. Tropomyosin, in association with the troponin complex, plays a central role in the calcium dependent regulation of muscle contraction. This chain is Tropomyosin, found in Echinococcus multilocularis (Fox tapeworm).